The chain runs to 940 residues: Protein translocase subunit SecA (940 aa).

ATP contacts are provided by residues Q86, 104–108, and D494; that span reads GEGKT. A disordered region spans residues 884–940; sequence ATAKAQKDQQAEDAVLVGEDEPETPQGPPARGAFGQPTGASSAPQNREERRKADRRK. The span at 929–940 shows a compositional bias: basic and acidic residues; the sequence is NREERRKADRRK.

This sequence belongs to the SecA family. In terms of assembly, monomer and homodimer. Part of the essential Sec protein translocation apparatus which comprises SecA, SecYEG and auxiliary proteins SecDF. Other proteins may also be involved.

Its subcellular location is the cell membrane. The protein resides in the cytoplasm. It carries out the reaction ATP + H2O + cellular proteinSide 1 = ADP + phosphate + cellular proteinSide 2.. Its function is as follows. Part of the Sec protein translocase complex. Interacts with the SecYEG preprotein conducting channel. Has a central role in coupling the hydrolysis of ATP to the transfer of proteins into and across the cell membrane, serving as an ATP-driven molecular motor driving the stepwise translocation of polypeptide chains across the membrane. The polypeptide is Protein translocase subunit SecA (Clavibacter sepedonicus (Clavibacter michiganensis subsp. sepedonicus)).